The following is a 193-amino-acid chain: Ion-translocating oxidoreductase complex subunit A (193 aa).

Helical transmembrane passes span 5–25 (LLLF…FLGL), 39–59 (IGMG…AWMV), 62–82 (FILL…LVIA), 102–122 (LLGI…VALL), 134–154 (AVYG…FAAI), and 171–191 (SIAL…TGLV).

The protein belongs to the NqrDE/RnfAE family. The complex is composed of six subunits: RnfA, RnfB, RnfC, RnfD, RnfE and RnfG.

The protein resides in the cell inner membrane. Its function is as follows. Part of a membrane-bound complex that couples electron transfer with translocation of ions across the membrane. In Yersinia pestis (strain Pestoides F), this protein is Ion-translocating oxidoreductase complex subunit A.